The sequence spans 155 residues: MRRRKAPVREVLGDPVYGNKVVTKFINKMMFDGKKSVAEKIIYKAFNKIEEKSGEKGIEVFEKALERVRPLVEVRSRRVGGATYQVPVEVRASRQQSLSIRWILEATRKRNERMMVDRLANELMDAASDKGAAFKKKEDVHKMAEANKAFAHYRW.

It belongs to the universal ribosomal protein uS7 family. As to quaternary structure, part of the 30S ribosomal subunit. Contacts proteins S9 and S11.

Its function is as follows. One of the primary rRNA binding proteins, it binds directly to 16S rRNA where it nucleates assembly of the head domain of the 30S subunit. Is located at the subunit interface close to the decoding center, probably blocks exit of the E-site tRNA. This is Small ribosomal subunit protein uS7 from Helicobacter acinonychis (strain Sheeba).